We begin with the raw amino-acid sequence, 308 residues long: Eukaryotic translation initiation factor 3 subunit G-B (308 aa).

Disordered regions lie at residues 1-35 (MPTG…KQDP) and 176-227 (STAD…DDNA). A compositionally biased stretch (low complexity) spans 185–194 (GAEPEPAQAP). Positions 209-227 (GGSRRGESMQPNRRADDNA) are enriched in basic and acidic residues. In terms of domain architecture, RRM spans 227 to 305 (ATIRVTNLSE…LILNVEWAKP (79 aa)).

It belongs to the eIF-3 subunit G family. As to quaternary structure, component of the eukaryotic translation initiation factor 3 (eIF-3) complex, which is composed of 13 subunits: eif3a, eif3b, eif3c, eif3d, eif3e, eif3f, eif3g, eif3h, eif3i, eif3j, eif3k, eif3l and eif3m.

It is found in the cytoplasm. Its function is as follows. RNA-binding component of the eukaryotic translation initiation factor 3 (eIF-3) complex, which is involved in protein synthesis of a specialized repertoire of mRNAs and, together with other initiation factors, stimulates binding of mRNA and methionyl-tRNAi to the 40S ribosome. The eIF-3 complex specifically targets and initiates translation of a subset of mRNAs involved in cell proliferation. This subunit can bind 18S rRNA. This chain is Eukaryotic translation initiation factor 3 subunit G-B (eif3g-b), found in Xenopus laevis (African clawed frog).